A 272-amino-acid chain; its full sequence is MSGFEQLFPGTLPRLVMFDLDGTLIDSVPDLAAAVDRMLLELGRPPAGLEAVRHWVGNGAQVLVRRALAGGIDHADVDDALAEQALALFMDAYAESHELTVVYPGVRDTLRWLRKQGVEMALITNKPERFVGPLLDQMKIGNFFRWIIGGDTLPQKKPDPAALLFVMQMAGVTPQQSLFVGDSRSDVQAAKAAGVQCVGLTYGYNHGRPIDAESPSLVIDDLRALLPGCADPATGITLADLQASQDRESTVAVTGKFWMKVIKALARWRWRA.

The active-site Nucleophile is aspartate 19. Mg(2+) contacts are provided by aspartate 19, aspartate 21, and aspartate 182.

The protein belongs to the HAD-like hydrolase superfamily. CbbY/CbbZ/Gph/YieH family. It depends on Mg(2+) as a cofactor.

The catalysed reaction is 2-phosphoglycolate + H2O = glycolate + phosphate. The protein operates within organic acid metabolism; glycolate biosynthesis; glycolate from 2-phosphoglycolate: step 1/1. In terms of biological role, specifically catalyzes the dephosphorylation of 2-phosphoglycolate. Is involved in the dissimilation of the intracellular 2-phosphoglycolate formed during the DNA repair of 3'-phosphoglycolate ends, a major class of DNA lesions induced by oxidative stress. This chain is Phosphoglycolate phosphatase, found in Pseudomonas putida (strain ATCC 47054 / DSM 6125 / CFBP 8728 / NCIMB 11950 / KT2440).